We begin with the raw amino-acid sequence, 399 residues long: Galactokinase (399 aa).

42–45 (EHTD) contributes to the substrate binding site. ATP contacts are provided by residues Ser76 and 133 to 139 (ASGLSSS). 2 residues coordinate Mg(2+): Ser139 and Glu171. The active-site Proton acceptor is the Asp183. Tyr233 contributes to the substrate binding site.

Belongs to the GHMP kinase family. GalK subfamily. Monomer.

It localises to the cytoplasm. It catalyses the reaction alpha-D-galactose + ATP = alpha-D-galactose 1-phosphate + ADP + H(+). The protein operates within carbohydrate metabolism; galactose metabolism. Catalyzes the transfer of the gamma-phosphate of ATP to D-galactose to form alpha-D-galactose-1-phosphate (Gal-1-P). This is Galactokinase from Lactococcus lactis subsp. lactis (strain IL1403) (Streptococcus lactis).